The chain runs to 235 residues: Glutathione S-transferase 1 (235 aa).

A GST N-terminal domain is found at 36–113 (EKYTLTYFNG…LLGGRFGLLG (78 aa)). Glutathione contacts are provided by residues Y42, W73, K77, V85, and 97–98 (ES). Residues 115–235 (NDWEEAKIMA…WIKKRPKTYF (121 aa)) form the GST C-terminal domain.

It belongs to the GST superfamily. Homodimer.

It carries out the reaction RX + glutathione = an S-substituted glutathione + a halide anion + H(+). This Onchocerca volvulus protein is Glutathione S-transferase 1 (GST1).